The following is a 320-amino-acid chain: Phosphatidylserine decarboxylase proenzyme (320 aa).

Active-site charge relay system; for autoendoproteolytic cleavage activity residues include D90, H147, and S254. Residue S254 is the Schiff-base intermediate with substrate; via pyruvic acid; for decarboxylase activity of the active site. Residue S254 is modified to Pyruvic acid (Ser); by autocatalysis. The tract at residues 288-320 (EASTAAEPAPLPEEEIRAEHRASPLVDDTQDQG) is disordered.

The protein belongs to the phosphatidylserine decarboxylase family. PSD-B subfamily. Prokaryotic type I sub-subfamily. As to quaternary structure, heterodimer of a large membrane-associated beta subunit and a small pyruvoyl-containing alpha subunit. Requires pyruvate as cofactor. In terms of processing, is synthesized initially as an inactive proenzyme. Formation of the active enzyme involves a self-maturation process in which the active site pyruvoyl group is generated from an internal serine residue via an autocatalytic post-translational modification. Two non-identical subunits are generated from the proenzyme in this reaction, and the pyruvate is formed at the N-terminus of the alpha chain, which is derived from the carboxyl end of the proenzyme. The autoendoproteolytic cleavage occurs by a canonical serine protease mechanism, in which the side chain hydroxyl group of the serine supplies its oxygen atom to form the C-terminus of the beta chain, while the remainder of the serine residue undergoes an oxidative deamination to produce ammonia and the pyruvoyl prosthetic group on the alpha chain. During this reaction, the Ser that is part of the protease active site of the proenzyme becomes the pyruvoyl prosthetic group, which constitutes an essential element of the active site of the mature decarboxylase.

The protein localises to the cell membrane. The catalysed reaction is a 1,2-diacyl-sn-glycero-3-phospho-L-serine + H(+) = a 1,2-diacyl-sn-glycero-3-phosphoethanolamine + CO2. Its pathway is phospholipid metabolism; phosphatidylethanolamine biosynthesis; phosphatidylethanolamine from CDP-diacylglycerol: step 2/2. Functionally, catalyzes the formation of phosphatidylethanolamine (PtdEtn) from phosphatidylserine (PtdSer). This is Phosphatidylserine decarboxylase proenzyme from Klebsiella pneumoniae (strain 342).